Here is a 419-residue protein sequence, read N- to C-terminus: S-adenosylmethionine synthase (419 aa).

His-14 contributes to the ATP binding site. Residue Asp-16 coordinates Mg(2+). Position 42 (Glu-42) interacts with K(+). Residues Glu-55 and Gln-98 each contribute to the L-methionine site. The interval 98 to 108 is flexible loop; the sequence is QSQDIYQGVDR. ATP contacts are provided by residues 164 to 166, 242 to 243, Asp-251, 257 to 258, Ala-274, and Lys-278; these read DSK, KF, and RK. Asp-251 provides a ligand contact to L-methionine. Lys-282 is an L-methionine binding site.

It belongs to the AdoMet synthase family. In terms of assembly, homotetramer; dimer of dimers. Mg(2+) is required as a cofactor. Requires K(+) as cofactor.

It is found in the cytoplasm. The enzyme catalyses L-methionine + ATP + H2O = S-adenosyl-L-methionine + phosphate + diphosphate. Its pathway is amino-acid biosynthesis; S-adenosyl-L-methionine biosynthesis; S-adenosyl-L-methionine from L-methionine: step 1/1. Functionally, catalyzes the formation of S-adenosylmethionine (AdoMet) from methionine and ATP. The overall synthetic reaction is composed of two sequential steps, AdoMet formation and the subsequent tripolyphosphate hydrolysis which occurs prior to release of AdoMet from the enzyme. The protein is S-adenosylmethionine synthase of Christiangramia forsetii (strain DSM 17595 / CGMCC 1.15422 / KT0803) (Gramella forsetii).